The primary structure comprises 221 residues: NADH-ubiquinone oxidoreductase chain 6 (221 aa).

A run of 5 helical transmembrane segments spans residues 18 to 38 (FVEY…IYVI), 44 to 64 (IVSV…LNII), 74 to 94 (IIVY…LINI), 107 to 127 (IPLT…MLPY), and 195 to 215 (IWLI…IVIT).

Belongs to the complex I subunit 6 family.

Its subcellular location is the mitochondrion membrane. The catalysed reaction is a ubiquinone + NADH + 5 H(+)(in) = a ubiquinol + NAD(+) + 4 H(+)(out). In terms of biological role, core subunit of the mitochondrial membrane respiratory chain NADH dehydrogenase (Complex I) that is believed to belong to the minimal assembly required for catalysis. Complex I functions in the transfer of electrons from NADH to the respiratory chain. The immediate electron acceptor for the enzyme is believed to be ubiquinone. The protein is NADH-ubiquinone oxidoreductase chain 6 (ND6) of Podospora anserina (strain S / ATCC MYA-4624 / DSM 980 / FGSC 10383) (Pleurage anserina).